A 216-amino-acid polypeptide reads, in one-letter code: Adenylate kinase (216 aa).

ATP is bound at residue 10–15 (GAGKGT). The segment at 30–59 (STGDIFRANIKEKTPLGIEAKRYIDNGQLV) is NMP. AMP-binding positions include Thr-31, Arg-36, 57 to 59 (QLV), 85 to 88 (GFPR), and Gln-92. The tract at residues 126-163 (GRRVCTSCGASYHIRFNPPKIEGKCDICDNELIQRKDD) is LID. Position 127 (Arg-127) interacts with ATP. 2 residues coordinate Zn(2+): Cys-130 and Cys-133. 136 to 137 (SY) serves as a coordination point for ATP. Zn(2+)-binding residues include Cys-150 and Cys-153. Residues Arg-160 and Arg-171 each coordinate AMP. Position 199 (Glu-199) interacts with ATP.

The protein belongs to the adenylate kinase family. In terms of assembly, monomer.

Its subcellular location is the cytoplasm. The enzyme catalyses AMP + ATP = 2 ADP. It participates in purine metabolism; AMP biosynthesis via salvage pathway; AMP from ADP: step 1/1. In terms of biological role, catalyzes the reversible transfer of the terminal phosphate group between ATP and AMP. Plays an important role in cellular energy homeostasis and in adenine nucleotide metabolism. This Clostridium botulinum (strain 657 / Type Ba4) protein is Adenylate kinase.